The chain runs to 471 residues: Putative multidrug resistance protein MdtD (471 aa).

The Periplasmic segment spans residues 1 to 11 (MTDLPDSTRWQ). Residues 12-32 (LWIVAFGFFMQSLDTTIVNTA) traverse the membrane as a helical segment. Topologically, residues 33–48 (LPSMAQSLGESPLHMH) are cytoplasmic. The chain crosses the membrane as a helical span at residues 49–69 (MVIVSYVLTVAVMLPASGWLA). Over 70 to 76 (DKVGVRN) the chain is Periplasmic. The helical transmembrane segment at 77-97 (IFFTAIVLFTLGSLFCALSGT) threads the bilayer. Residues 98 to 101 (LNEL) lie on the Cytoplasmic side of the membrane. The chain crosses the membrane as a helical span at residues 102-124 (LLARALQGVGGAMMVPVGRLTVM). Over 125-137 (KIVPREQYMAAMT) the chain is Periplasmic. A helical transmembrane segment spans residues 138–158 (FVTLPGQIGPLLGPALGGLLV). Over 159 to 164 (EYASWH) the chain is Cytoplasmic. The chain crosses the membrane as a helical span at residues 165–185 (WIFLINIPVGIIGAITTLMLM). The Periplasmic portion of the chain corresponds to 186–196 (PNYTMQTRRFD). The chain crosses the membrane as a helical span at residues 197 to 217 (LSGFLLLAVGMAVLTLALDGS). The Cytoplasmic portion of the chain corresponds to 218 to 224 (KGTGFSP). The helical transmembrane segment at 225–245 (LAIAGLVAVGVVALVLYLLHA) threads the bilayer. The Periplasmic portion of the chain corresponds to 246-262 (QNNNRALFSLKLFRTRT). The helical transmembrane segment at 263-283 (FSLGLAGSFAGRIGSGMLPFM) threads the bilayer. At 284–285 (TP) the chain is on the cytoplasmic side. Residues 286–306 (VFLQIGFGFSPFHAGLMMIPM) traverse the membrane as a helical segment. The Periplasmic segment spans residues 307-341 (VLGSMGMKRIVVQVVNRFGYRRVLVATTLGLSLVT). A helical membrane pass occupies residues 342–362 (LLFMTTALLGWYYVLPFVLFL). Residues 363 to 395 (QGMVNSTRFSSMNTLTLKDLPDNLASSGNSLLS) are Cytoplasmic-facing. A helical transmembrane segment spans residues 396–416 (MIMQLSMSIGVTIAGLLLGLF). The Periplasmic segment spans residues 417–430 (GSQHVSVDSGTTQT). A helical membrane pass occupies residues 431-451 (VFMYTWLSMASIIALPAFIFA). Residues 452 to 471 (RVPNDTHQNVAISRRKRSAQ) lie on the Cytoplasmic side of the membrane.

It belongs to the major facilitator superfamily. TCR/Tet family.

The protein localises to the cell inner membrane. In Escherichia coli O6:H1 (strain CFT073 / ATCC 700928 / UPEC), this protein is Putative multidrug resistance protein MdtD.